Here is a 349-residue protein sequence, read N- to C-terminus: UPF0284 protein MA_3887 (349 aa).

This sequence belongs to the UPF0284 family.

The protein is UPF0284 protein MA_3887 of Methanosarcina acetivorans (strain ATCC 35395 / DSM 2834 / JCM 12185 / C2A).